A 1067-amino-acid chain; its full sequence is Receptor-type guanylate cyclase gcy-10 (1067 aa).

The N-terminal stretch at 1 to 20 is a signal peptide; sequence MLKSLLIIVIVFLHRELCDG. The Extracellular portion of the chain corresponds to 21–438; the sequence is IQLILFDNWP…CVAKSSCVNY (418 aa). N-linked (GlcNAc...) asparagine glycosylation is present at Asn-411. A helical membrane pass occupies residues 439 to 459; it reads IPHIIAAVVIVTIIVIAIVII. The Cytoplasmic portion of the chain corresponds to 460 to 1067; sequence VKQRRHKLNI…RGSIVPLQKA (608 aa). Positions 509-791 constitute a Protein kinase domain; that stretch reads ALTSRRRVFG…ESISTVYPLS (283 aa). ATP contacts are provided by residues 515-523 and Lys-534; that span reads RVFGSYALV. The region spanning 859-989 is the Guanylate cyclase domain; that stretch reads TVMFVQICDF…DTVNFASRMQ (131 aa).

This sequence belongs to the adenylyl cyclase class-4/guanylyl cyclase family. As to expression, expressed predominantly in AWC but also in AWB, ASI, ASJ and ASK sensory neurons and in I1 interneuron.

The protein resides in the cell membrane. The protein localises to the cell projection. It is found in the cilium. The enzyme catalyses GTP = 3',5'-cyclic GMP + diphosphate. Its function is as follows. Guanylate cyclase involved in the production of the second messenger cGMP. Regulates chemotaxis responses toward volatile odorants in AWC sensory neurons and their avoidance in AWB sensory neurons. May be involved in sensitivity to quinine by regulating egl-4 activity through the production of cGMP. Involved in phototransduction in ASJ neurons downstream of G protein coupled-photoreceptor lite-1. Required to maintain the expression of putative olfactory receptor str-2 in AWC neurons in adults. In AWB and AWC sensory neurons, mediates the recognition of food oders which subsequently allows for the detection of preferred food sources. Involved in AWB sensory neuron development and extension during postembryonic development, potentially via mediating localization of tub-1 and PI(4,5)P2 to membrane cilia. In Caenorhabditis elegans, this protein is Receptor-type guanylate cyclase gcy-10.